A 198-amino-acid chain; its full sequence is MVEKHLLEFLEKLQFLIAKNVKISHYGIENVKKICGVDIAYKGNLGFSVGVSMDINSGDYNYKSYVGEVNFPYIPGFLFMREAPLMIKAIEGLDCHLLLVDGHGIAHPRKSGIAAVIGVLLDFPTIGVAKSRLTGDLVNESEITYVYLNGEKVGVKFGRYFYSPGNKVDLQDCIELGKRGYPKVLKIADMLTKKTKKE.

Residues Asp-38 and Asp-101 each contribute to the Mg(2+) site.

Belongs to the endonuclease V family. Mg(2+) is required as a cofactor.

The protein resides in the cytoplasm. The catalysed reaction is Endonucleolytic cleavage at apurinic or apyrimidinic sites to products with a 5'-phosphate.. In terms of biological role, DNA repair enzyme involved in the repair of deaminated bases. Selectively cleaves double-stranded DNA at the second phosphodiester bond 3' to a deoxyinosine leaving behind the intact lesion on the nicked DNA. The chain is Endonuclease V from Saccharolobus islandicus (strain M.16.27) (Sulfolobus islandicus).